We begin with the raw amino-acid sequence, 366 residues long: Arfaptin-1 (366 aa).

The interval 1 to 78 is disordered; sequence MAEESPKNSA…SSAPPLPCVL (78 aa). A2 carries the N-acetylalanine modification. S5 is modified (phosphoserine). Positions 22–35 are enriched in basic and acidic residues; sequence GDAHEHGYNRDLKH. A phosphoserine mark is found at S36 and S39. Residues 44 to 53 are compositionally biased toward polar residues; sequence SETQITSHGF. Phosphoserine occurs at positions 69, 79, and 125. An AH domain is found at 146–346; sequence TVDLELEAQI…NQKQLEQTLK (201 aa). Residue T354 is modified to Phosphothreonine.

As to quaternary structure, forms homodimers or heterodimers with ARFIP2. Interacts with non-myristoylated GTP-bound ARF3, but not to GDP-bound ARF3. Interacts with ARF1. Binds with lower affinity to ARF5 and with very little affinity to ARF6. Interacts with ARL1. Interacts with ATG9A.

It is found in the golgi apparatus. It localises to the trans-Golgi network membrane. Functionally, plays a role in controlling biogenesis of secretory granules at the trans-Golgi network. Mechanistically, binds ARF-GTP at the neck of a growing secretory granule precursor and forms a protective scaffold. Once the granule precursor has been completely loaded, active PRKD1 phosphorylates ARFIP1 and releases it from ARFs. In turn, ARFs induce fission. Through this mechanism, ensures proper secretory granule formation at the Golgi of pancreatic beta cells. This is Arfaptin-1 from Rattus norvegicus (Rat).